Here is a 99-residue protein sequence, read N- to C-terminus: Integration host factor subunit alpha (99 aa).

The segment at 49–73 (FGNFDLRDKNQRPGRNPKTGEDIPI) is disordered.

Belongs to the bacterial histone-like protein family. As to quaternary structure, heterodimer of an alpha and a beta chain.

Functionally, this protein is one of the two subunits of integration host factor, a specific DNA-binding protein that functions in genetic recombination as well as in transcriptional and translational control. The chain is Integration host factor subunit alpha from Shigella boydii serotype 18 (strain CDC 3083-94 / BS512).